A 54-amino-acid polypeptide reads, in one-letter code: UPF0391 membrane protein Reut_A0124 (54 aa).

2 helical membrane-spanning segments follow: residues 5 to 25 and 30 to 50; these read ALVF…GIAA and IAKI…VMGL.

This sequence belongs to the UPF0391 family.

The protein resides in the cell membrane. This chain is UPF0391 membrane protein Reut_A0124, found in Cupriavidus pinatubonensis (strain JMP 134 / LMG 1197) (Cupriavidus necator (strain JMP 134)).